We begin with the raw amino-acid sequence, 357 residues long: Carbamoyl phosphate synthase small chain (357 aa).

The interval 1–168 is CPSase; the sequence is MSKRLLILED…STTTAYPSPN (168 aa). Residues serine 46, glycine 220, and glycine 222 each coordinate L-glutamine. Positions 172-357 constitute a Glutamine amidotransferase type-1 domain; it reads KVVVVDFGLK…FMDLMDNFKK (186 aa). The active-site Nucleophile is the cysteine 247. L-glutamine-binding residues include leucine 248, glutamine 251, asparagine 289, glycine 291, and tyrosine 292. Catalysis depends on residues histidine 331 and aspartate 333.

This sequence belongs to the CarA family. As to quaternary structure, composed of two chains; the small (or glutamine) chain promotes the hydrolysis of glutamine to ammonia, which is used by the large (or ammonia) chain to synthesize carbamoyl phosphate. Tetramer of heterodimers (alpha,beta)4.

It carries out the reaction hydrogencarbonate + L-glutamine + 2 ATP + H2O = carbamoyl phosphate + L-glutamate + 2 ADP + phosphate + 2 H(+). The catalysed reaction is L-glutamine + H2O = L-glutamate + NH4(+). The protein operates within amino-acid biosynthesis; L-arginine biosynthesis; carbamoyl phosphate from bicarbonate: step 1/1. It participates in pyrimidine metabolism; UMP biosynthesis via de novo pathway; (S)-dihydroorotate from bicarbonate: step 1/3. In terms of biological role, small subunit of the glutamine-dependent carbamoyl phosphate synthetase (CPSase). CPSase catalyzes the formation of carbamoyl phosphate from the ammonia moiety of glutamine, carbonate, and phosphate donated by ATP, constituting the first step of 2 biosynthetic pathways, one leading to arginine and/or urea and the other to pyrimidine nucleotides. The small subunit (glutamine amidotransferase) binds and cleaves glutamine to supply the large subunit with the substrate ammonia. This chain is Carbamoyl phosphate synthase small chain, found in Lactococcus lactis subsp. lactis (strain IL1403) (Streptococcus lactis).